Here is a 488-residue protein sequence, read N- to C-terminus: Probable cytosol aminopeptidase (488 aa).

The Mn(2+) site is built by lysine 253 and aspartate 258. Residue lysine 265 is part of the active site. Residues aspartate 276, aspartate 335, and glutamate 337 each coordinate Mn(2+). Arginine 339 is a catalytic residue.

It belongs to the peptidase M17 family. It depends on Mn(2+) as a cofactor.

It is found in the cytoplasm. It carries out the reaction Release of an N-terminal amino acid, Xaa-|-Yaa-, in which Xaa is preferably Leu, but may be other amino acids including Pro although not Arg or Lys, and Yaa may be Pro. Amino acid amides and methyl esters are also readily hydrolyzed, but rates on arylamides are exceedingly low.. The enzyme catalyses Release of an N-terminal amino acid, preferentially leucine, but not glutamic or aspartic acids.. In terms of biological role, presumably involved in the processing and regular turnover of intracellular proteins. Catalyzes the removal of unsubstituted N-terminal amino acids from various peptides. In Dinoroseobacter shibae (strain DSM 16493 / NCIMB 14021 / DFL 12), this protein is Probable cytosol aminopeptidase.